The following is a 200-amino-acid chain: Recombination protein RecR (200 aa).

The C4-type zinc-finger motif lies at 59–74 (CSVCGSLDTSDPCAIC). Residues 82–177 (RLLCVVEEVG…SVTMLARGVP (96 aa)) form the Toprim domain.

It belongs to the RecR family.

Functionally, may play a role in DNA repair. It seems to be involved in an RecBC-independent recombinational process of DNA repair. It may act with RecF and RecO. This chain is Recombination protein RecR, found in Caulobacter sp. (strain K31).